The following is a 305-amino-acid chain: Elongation factor Ts (305 aa).

The interval 79 to 82 (TDFV) is involved in Mg(2+) ion dislocation from EF-Tu.

The protein belongs to the EF-Ts family.

The protein localises to the cytoplasm. Functionally, associates with the EF-Tu.GDP complex and induces the exchange of GDP to GTP. It remains bound to the aminoacyl-tRNA.EF-Tu.GTP complex up to the GTP hydrolysis stage on the ribosome. The sequence is that of Elongation factor Ts from Brucella anthropi (strain ATCC 49188 / DSM 6882 / CCUG 24695 / JCM 21032 / LMG 3331 / NBRC 15819 / NCTC 12168 / Alc 37) (Ochrobactrum anthropi).